The primary structure comprises 290 residues: Ribosomal protein L11 methyltransferase (290 aa).

4 residues coordinate S-adenosyl-L-methionine: Thr-135, Gly-158, Asp-180, and Asn-227.

The protein belongs to the methyltransferase superfamily. PrmA family.

The protein resides in the cytoplasm. It carries out the reaction L-lysyl-[protein] + 3 S-adenosyl-L-methionine = N(6),N(6),N(6)-trimethyl-L-lysyl-[protein] + 3 S-adenosyl-L-homocysteine + 3 H(+). Functionally, methylates ribosomal protein L11. The protein is Ribosomal protein L11 methyltransferase of Mesorhizobium japonicum (strain LMG 29417 / CECT 9101 / MAFF 303099) (Mesorhizobium loti (strain MAFF 303099)).